The following is a 185-amino-acid chain: Elongation factor P (185 aa).

This sequence belongs to the elongation factor P family.

The protein localises to the cytoplasm. It functions in the pathway protein biosynthesis; polypeptide chain elongation. Involved in peptide bond synthesis. Stimulates efficient translation and peptide-bond synthesis on native or reconstituted 70S ribosomes in vitro. Probably functions indirectly by altering the affinity of the ribosome for aminoacyl-tRNA, thus increasing their reactivity as acceptors for peptidyl transferase. The protein is Elongation factor P of Limosilactobacillus reuteri (strain DSM 20016) (Lactobacillus reuteri).